The primary structure comprises 197 residues: Imidazoleglycerol-phosphate dehydratase (197 aa).

This sequence belongs to the imidazoleglycerol-phosphate dehydratase family.

The protein resides in the cytoplasm. It carries out the reaction D-erythro-1-(imidazol-4-yl)glycerol 3-phosphate = 3-(imidazol-4-yl)-2-oxopropyl phosphate + H2O. It functions in the pathway amino-acid biosynthesis; L-histidine biosynthesis; L-histidine from 5-phospho-alpha-D-ribose 1-diphosphate: step 6/9. This Syntrophus aciditrophicus (strain SB) protein is Imidazoleglycerol-phosphate dehydratase.